The sequence spans 377 residues: Diels-Alderase fsa2 (377 aa).

This sequence belongs to the Diels-Alderase family.

It catalyses the reaction (5S)-3-[(2E,6R,8E,10E,12E)-2,6-dimethyltetradeca-2,8,10,12-tetraenoyl]-5-(hydroxymethyl)pyrrolidine-2,4-dione = trichosetin. It functions in the pathway mycotoxin biosynthesis. Its function is as follows. Diels-Alderase; part of the gene cluster that mediates the biosynthesis of equisetin, a trans-fused decalin-containing tetramic acid with antimicrobial activity. The PKS module of eqxS together with the enoylreductase eqxC catalyze the formation of the polyketide unit which is then conjugated to L-serine by the condensation domain of the eqxS NRPS module. Activity of the Dieckmann cyclase domain (RED) results in release of the Dieckmann product intermediate. Diels-Alderase eqx3 is involved in endo-selective Diels-Alder cycloaddition to form the decalin ring, leading to the production of N-desmethylequisetin also called trichosetin. Subsequent N-methylation is carried out by eqxD to give equisetin. The chain is Diels-Alderase fsa2 from Fusarium heterosporum.